The following is a 248-amino-acid chain: ATP synthase subunit a, chloroplastic (248 aa).

5 helical membrane-spanning segments follow: residues 38 to 58 (QVLI…TIAV), 96 to 116 (VPFI…GALL), 135 to 155 (INTT…AGLA), 200 to 220 (LVVA…VMFL), and 221 to 241 (GLFT…AYIG).

It belongs to the ATPase A chain family. F-type ATPases have 2 components, CF(1) - the catalytic core - and CF(0) - the membrane proton channel. CF(1) has five subunits: alpha(3), beta(3), gamma(1), delta(1), epsilon(1). CF(0) has four main subunits: a, b, b' and c.

It is found in the plastid. The protein resides in the chloroplast thylakoid membrane. In terms of biological role, key component of the proton channel; it plays a direct role in the translocation of protons across the membrane. The chain is ATP synthase subunit a, chloroplastic from Pinus koraiensis (Korean pine).